The sequence spans 246 residues: Exosome complex component Rrp41 (246 aa).

This sequence belongs to the RNase PH family. Rrp41 subfamily. As to quaternary structure, component of the archaeal exosome complex. Forms a hexameric ring-like arrangement composed of 3 Rrp41-Rrp42 heterodimers. The hexameric ring associates with a trimer of Rrp4 and/or Csl4 subunits.

Its subcellular location is the cytoplasm. Catalytic component of the exosome, which is a complex involved in RNA degradation. Has 3'-&gt;5' exoribonuclease activity. Can also synthesize heteromeric RNA-tails. The polypeptide is Exosome complex component Rrp41 (Pyrobaculum aerophilum (strain ATCC 51768 / DSM 7523 / JCM 9630 / CIP 104966 / NBRC 100827 / IM2)).